The chain runs to 478 residues: MSSYSELSNLPIREIPGDYGFPIISAIKDRYDYFYNQGEDAWFHNKAEKYKSTVVKINMAPGPFTSNDYKLVAFLDANSFVCMFDNSLIDKTDTLGGTFKPGKEYYSGYRPVAFIDTKDPNHAALKGYILSAFAKRHNLFIPLFRNSLSDHLFNNLEKQVTEQGKSDFNALLPTMTFNFIFRLLCDQTNPSDTVLGAQGPEHLRKWLFPQLIPSLSAKKLPNIIEDTLFHNFLIPFGFIKSDYNKLVDAFSKSAVSILDEAEKLGIKREEAVQNILFLVGINMFAGLNAFSPHLFRFVGEAGASLHTQLAKEIRTVIKEEGGAITLSAINKMSLVKSVVYETLRLRPPVPLQYGKAKKDFMVQSHDASYKINKGQFVVGYQPMASRDPKIFANPDEFVPDRFMNDGEKMLKHVLWSNGRETENPAPDNKQCPGKDLVHLLGRLILVEFFMRYDTFTVEITPLFRAPNVAFKTLTKASK.

A heme-binding site is contributed by cysteine 431.

This sequence belongs to the cytochrome P450 family. 9-divinyl ether synthase subfamily. As to expression, expressed in roots.

It catalyses the reaction (9S)-hydroperoxy-(10E,12Z)-octadecadienoate = colneleate + H2O. The catalysed reaction is (9S)-hydroperoxy-(10E,12Z,15Z)-octadecatrienoate = colnelenate + H2O. In terms of biological role, involved in the biosynthesis of the anti-fungal and antibacterial toxins colneleate and colnelenate. Can use (9S)-hydroperoxy-(10E,12Z)-octadecadienoate (9-HPOD) and (9S)-hydroperoxy-(10E,12Z,15Z)-octadecatrienoate (9-HPOT) as substrates but has no activity with the corresponding 13-hydroperoxides (13-HPOD and 13-HPOT). This chain is Divinyl ether synthase CYP74D2, found in Solanum tuberosum (Potato).